The chain runs to 162 residues: Cyclic pyranopterin monophosphate synthase (162 aa).

Substrate is bound by residues 75-77 (LCH) and 113-114 (ME). The active site involves Asp128.

It belongs to the MoaC family. As to quaternary structure, homohexamer; trimer of dimers.

The catalysed reaction is (8S)-3',8-cyclo-7,8-dihydroguanosine 5'-triphosphate = cyclic pyranopterin phosphate + diphosphate. The protein operates within cofactor biosynthesis; molybdopterin biosynthesis. Its function is as follows. Catalyzes the conversion of (8S)-3',8-cyclo-7,8-dihydroguanosine 5'-triphosphate to cyclic pyranopterin monophosphate (cPMP). The protein is Cyclic pyranopterin monophosphate synthase of Klebsiella pneumoniae (strain 342).